Reading from the N-terminus, the 504-residue chain is ATP synthase subunit alpha 2 (504 aa).

169–176 (GDRQTGKT) lines the ATP pocket.

Belongs to the ATPase alpha/beta chains family. In terms of assembly, F-type ATPases have 2 components, CF(1) - the catalytic core - and CF(0) - the membrane proton channel. CF(1) has five subunits: alpha(3), beta(3), gamma(1), delta(1), epsilon(1). CF(0) has three main subunits: a(1), b(2) and c(9-12). The alpha and beta chains form an alternating ring which encloses part of the gamma chain. CF(1) is attached to CF(0) by a central stalk formed by the gamma and epsilon chains, while a peripheral stalk is formed by the delta and b chains.

The protein resides in the cell membrane. It catalyses the reaction ATP + H2O + 4 H(+)(in) = ADP + phosphate + 5 H(+)(out). In terms of biological role, produces ATP from ADP in the presence of a proton gradient across the membrane. The alpha chain is a regulatory subunit. The sequence is that of ATP synthase subunit alpha 2 from Listeria welshimeri serovar 6b (strain ATCC 35897 / DSM 20650 / CCUG 15529 / CIP 8149 / NCTC 11857 / SLCC 5334 / V8).